The chain runs to 295 residues: Ethanolamine ammonia-lyase small subunit (295 aa).

Positions 207, 228, and 258 each coordinate adenosylcob(III)alamin.

It belongs to the EutC family. The basic unit is a heterodimer which dimerizes to form tetramers. The heterotetramers trimerize; 6 large subunits form a core ring with 6 small subunits projecting outwards. Requires adenosylcob(III)alamin as cofactor.

It is found in the bacterial microcompartment. It carries out the reaction ethanolamine = acetaldehyde + NH4(+). It participates in amine and polyamine degradation; ethanolamine degradation. Catalyzes the deamination of various vicinal amino-alcohols to oxo compounds. Allows this organism to utilize ethanolamine as the sole source of nitrogen and carbon in the presence of external vitamin B12. The protein is Ethanolamine ammonia-lyase small subunit of Escherichia fergusonii (strain ATCC 35469 / DSM 13698 / CCUG 18766 / IAM 14443 / JCM 21226 / LMG 7866 / NBRC 102419 / NCTC 12128 / CDC 0568-73).